The chain runs to 211 residues: Thiamine-phosphate synthase (211 aa).

4-amino-2-methyl-5-(diphosphooxymethyl)pyrimidine is bound by residues 37 to 41 and Asn69; that span reads QLRIK. Asp70 and Asp89 together coordinate Mg(2+). Ser108 lines the 4-amino-2-methyl-5-(diphosphooxymethyl)pyrimidine pocket. 134-136 contributes to the 2-[(2R,5Z)-2-carboxy-4-methylthiazol-5(2H)-ylidene]ethyl phosphate binding site; the sequence is TQT. Lys137 is a binding site for 4-amino-2-methyl-5-(diphosphooxymethyl)pyrimidine. Residues Gly166 and 186 to 187 contribute to the 2-[(2R,5Z)-2-carboxy-4-methylthiazol-5(2H)-ylidene]ethyl phosphate site; that span reads VS.

It belongs to the thiamine-phosphate synthase family. It depends on Mg(2+) as a cofactor.

The enzyme catalyses 2-[(2R,5Z)-2-carboxy-4-methylthiazol-5(2H)-ylidene]ethyl phosphate + 4-amino-2-methyl-5-(diphosphooxymethyl)pyrimidine + 2 H(+) = thiamine phosphate + CO2 + diphosphate. The catalysed reaction is 2-(2-carboxy-4-methylthiazol-5-yl)ethyl phosphate + 4-amino-2-methyl-5-(diphosphooxymethyl)pyrimidine + 2 H(+) = thiamine phosphate + CO2 + diphosphate. It carries out the reaction 4-methyl-5-(2-phosphooxyethyl)-thiazole + 4-amino-2-methyl-5-(diphosphooxymethyl)pyrimidine + H(+) = thiamine phosphate + diphosphate. It participates in cofactor biosynthesis; thiamine diphosphate biosynthesis; thiamine phosphate from 4-amino-2-methyl-5-diphosphomethylpyrimidine and 4-methyl-5-(2-phosphoethyl)-thiazole: step 1/1. Condenses 4-methyl-5-(beta-hydroxyethyl)thiazole monophosphate (THZ-P) and 2-methyl-4-amino-5-hydroxymethyl pyrimidine pyrophosphate (HMP-PP) to form thiamine monophosphate (TMP). The sequence is that of Thiamine-phosphate synthase from Salmonella schwarzengrund (strain CVM19633).